The chain runs to 449 residues: Bifunctional F420 biosynthesis protein FbiB (449 aa).

The tract at residues 1 to 245 is coenzyme F420:L-glutamate ligase; the sequence is MSPAGEHGTA…PGTEDLFWLG (245 aa). GTP-binding positions include 21–24, Ser51, and Lys56; that span reads LPEF. Asp110 serves as a coordination point for a divalent metal cation. GTP is bound at residue Asn113. Asp151 and Thr152 together coordinate a divalent metal cation. A dehydro-coenzyme F420-0 reductase region spans residues 246-449; sequence TAEAIELGRR…ADPGDLLIRK (204 aa). FMN-binding positions include 261-265 and Ala289; that span reads RRSVR. Asp321 is a coenzyme F420-(gamma-Glu)n binding site. The FMN site is built by Gly400 and Arg437.

This sequence in the N-terminal section; belongs to the CofE family. Mg(2+) is required as a cofactor. It depends on Mn(2+) as a cofactor. K(+) serves as cofactor.

The catalysed reaction is oxidized coenzyme F420-0 + GTP + L-glutamate = oxidized coenzyme F420-1 + GDP + phosphate + H(+). It catalyses the reaction oxidized coenzyme F420-1 + GTP + L-glutamate = oxidized coenzyme F420-2 + GDP + phosphate + H(+). The enzyme catalyses oxidized coenzyme F420-(gamma-L-Glu)(n) + GTP + L-glutamate = oxidized coenzyme F420-(gamma-L-Glu)(n+1) + GDP + phosphate + H(+). It carries out the reaction oxidized coenzyme F420-0 + FMN + H(+) = dehydro coenzyme F420-0 + FMNH2. Its pathway is cofactor biosynthesis; coenzyme F420 biosynthesis. Its function is as follows. Bifunctional enzyme that catalyzes the GTP-dependent successive addition of multiple gamma-linked L-glutamates to the L-lactyl phosphodiester of 7,8-didemethyl-8-hydroxy-5-deazariboflavin (F420-0) to form polyglutamated F420 derivatives, and the FMNH2-dependent reduction of dehydro-F420-0 to form F420-0. The protein is Bifunctional F420 biosynthesis protein FbiB of Mycobacterium avium (strain 104).